The following is a 127-amino-acid chain: Major sperm protein 2 (127 aa).

At Ala-2 the chain carries N-acetylalanine. The MSP domain occupies 9–126 (DIHTQPGSKI…RRKNLPIEYN (118 aa)).

In terms of tissue distribution, sperm.

The protein localises to the cell projection. It is found in the pseudopodium. It localises to the cytoplasm. The protein resides in the cytoskeleton. Its function is as follows. Central component in molecular interactions underlying sperm crawling. Forms an extensive filament system that extends from sperm villipoda, along the leading edge of the pseudopod. This chain is Major sperm protein 2, found in Onchocerca volvulus.